The following is a 549-amino-acid chain: Cytoplasmic trehalase (549 aa).

Substrate-binding positions include arginine 168, 175 to 176 (WD), asparagine 212, 221 to 223 (RSQ), 292 to 294 (RDE), and glycine 324. Active-site proton donor/acceptor residues include aspartate 326 and glutamate 509. Glutamate 525 is a binding site for substrate.

This sequence belongs to the glycosyl hydrolase 37 family. In terms of assembly, monomer.

Its subcellular location is the cytoplasm. It catalyses the reaction alpha,alpha-trehalose + H2O = alpha-D-glucose + beta-D-glucose. Its pathway is glycan degradation; trehalose degradation; D-glucose from alpha,alpha-trehalose: step 1/1. Its function is as follows. Hydrolyzes trehalose to glucose. Could be involved, in cells returning to low osmolarity conditions, in the utilization of the accumulated cytoplasmic trehalose, which was synthesized in response to high osmolarity. This is Cytoplasmic trehalase from Salmonella typhi.